We begin with the raw amino-acid sequence, 394 residues long: Phosphoglycerate kinase (394 aa).

Substrate contacts are provided by residues 21–23 (DFN), Arg37, 60–63 (HLGR), Arg119, and Arg152. Residues Lys202, Glu324, and 350–353 (GGDS) contribute to the ATP site.

The protein belongs to the phosphoglycerate kinase family. As to quaternary structure, monomer.

Its subcellular location is the cytoplasm. The catalysed reaction is (2R)-3-phosphoglycerate + ATP = (2R)-3-phospho-glyceroyl phosphate + ADP. The protein operates within carbohydrate degradation; glycolysis; pyruvate from D-glyceraldehyde 3-phosphate: step 2/5. In Carboxydothermus hydrogenoformans (strain ATCC BAA-161 / DSM 6008 / Z-2901), this protein is Phosphoglycerate kinase.